Consider the following 313-residue polypeptide: Ribosomal RNA small subunit methyltransferase H (313 aa).

S-adenosyl-L-methionine contacts are provided by residues 35-37 (GGH), D55, F81, D103, and Q110.

It belongs to the methyltransferase superfamily. RsmH family.

The protein localises to the cytoplasm. The catalysed reaction is cytidine(1402) in 16S rRNA + S-adenosyl-L-methionine = N(4)-methylcytidine(1402) in 16S rRNA + S-adenosyl-L-homocysteine + H(+). Its function is as follows. Specifically methylates the N4 position of cytidine in position 1402 (C1402) of 16S rRNA. This is Ribosomal RNA small subunit methyltransferase H from Pseudomonas syringae pv. syringae (strain B728a).